Here is a 118-residue protein sequence, read N- to C-terminus: Large ribosomal subunit protein bL20 (118 aa).

This sequence belongs to the bacterial ribosomal protein bL20 family.

Binds directly to 23S ribosomal RNA and is necessary for the in vitro assembly process of the 50S ribosomal subunit. It is not involved in the protein synthesizing functions of that subunit. The chain is Large ribosomal subunit protein bL20 from Psychrobacter sp. (strain PRwf-1).